The primary structure comprises 107 residues: Thioredoxin (107 aa).

A Thioredoxin domain is found at 2–107 (AGVLKNVTDD…ALLRPGPVPR (106 aa)). C33 and C36 are oxidised to a cystine.

Belongs to the thioredoxin family.

Its function is as follows. Component of the thioredoxin-thioredoxin reductase system. Participates in various redox reactions through the reversible oxidation of its active center dithiol to a disulfide and catalyzes dithiol-disulfide exchange reactions. In Streptomyces clavuligerus, this protein is Thioredoxin (trxA).